A 55-amino-acid polypeptide reads, in one-letter code: Mitochondrial import receptor subunit TOM7 homolog (55 aa).

Residues 1–20 (MVKLSKEAKQRLQQLFKGGQ) are Cytoplasmic-facing. The chain crosses the membrane as a helical span at residues 21–40 (FAIRWGFIPLVIYLGFTRGA). Residues 41–55 (DPGMPEPSVLSLLWG) lie on the Mitochondrial intermembrane side of the membrane.

Belongs to the Tom7 family. As to quaternary structure, forms part of the preprotein translocase complex of the outer mitochondrial membrane (TOM complex) which consists of at least 7 different proteins (TOMM5, TOMM6, TOMM7, TOMM20, TOMM22, TOMM40 and TOMM70).

It is found in the mitochondrion outer membrane. Required for assembly and stability of the TOM complex. Positive regulator of PRKN translocation to damaged mitochondria. Acts probably by stabilizing PINK1 on the outer membrane of depolarized mitochondria. This is Mitochondrial import receptor subunit TOM7 homolog (Tomm7) from Mus musculus (Mouse).